We begin with the raw amino-acid sequence, 406 residues long: Tyrosine--tRNA ligase (406 aa).

Tyr-35 contributes to the L-tyrosine binding site. The short motif at 40–49 is the 'HIGH' region element; the sequence is ATSTSLHIGH. Residues Tyr-166 and Gln-170 each contribute to the L-tyrosine site. The 'KMSKS' region signature appears at 226–230; it reads KMGKS. Residue Lys-229 participates in ATP binding. The S4 RNA-binding domain occupies 341–405; it reads ILLVDLMVSS…IGKKKILRII (65 aa).

Belongs to the class-I aminoacyl-tRNA synthetase family. TyrS type 1 subfamily. In terms of assembly, homodimer.

It localises to the cytoplasm. The enzyme catalyses tRNA(Tyr) + L-tyrosine + ATP = L-tyrosyl-tRNA(Tyr) + AMP + diphosphate + H(+). Its function is as follows. Catalyzes the attachment of tyrosine to tRNA(Tyr) in a two-step reaction: tyrosine is first activated by ATP to form Tyr-AMP and then transferred to the acceptor end of tRNA(Tyr). The chain is Tyrosine--tRNA ligase from Borrelia hermsii (strain HS1 / DAH).